A 279-amino-acid chain; its full sequence is MTYADKIFKQNIQNILDNGVFSENARPKYKDGQTANSKYVTGSFVTYDLQKGEFPITTLRPIPIKSAIKELMWIYQDQTSELAILEEKYGVKYWGEWGIGDGTIGQRYGATVKKYNIIGKLLDGLAKNPWNRRNIINLWQYEDFEETEGLLPCAFQTMFDVRREQDGQIYLDATLIQRSNDMLVAHHINAMQYVALQMMIAKHFSWKVGKFFYFVNNLHIYDNQFEQANELVKRTASDKEPRLVLNVPDGTNFFDIKPEDFELVDYEPVKPQLKFDLAI.

Residue 132-133 (RR) participates in dUMP binding. Cysteine 153 functions as the Nucleophile in the catalytic mechanism. DUMP-binding positions include 178–181 (RSND), asparagine 189, and 219–221 (HIY). Aspartate 181 is a binding site for (6R)-5,10-methylene-5,6,7,8-tetrahydrofolate. Alanine 278 contacts (6R)-5,10-methylene-5,6,7,8-tetrahydrofolate.

Belongs to the thymidylate synthase family. Bacterial-type ThyA subfamily. As to quaternary structure, homodimer.

Its subcellular location is the cytoplasm. The enzyme catalyses dUMP + (6R)-5,10-methylene-5,6,7,8-tetrahydrofolate = 7,8-dihydrofolate + dTMP. It functions in the pathway pyrimidine metabolism; dTTP biosynthesis. Its function is as follows. Catalyzes the reductive methylation of 2'-deoxyuridine-5'-monophosphate (dUMP) to 2'-deoxythymidine-5'-monophosphate (dTMP) while utilizing 5,10-methylenetetrahydrofolate (mTHF) as the methyl donor and reductant in the reaction, yielding dihydrofolate (DHF) as a by-product. This enzymatic reaction provides an intracellular de novo source of dTMP, an essential precursor for DNA biosynthesis. This chain is Thymidylate synthase, found in Lactococcus lactis subsp. lactis (strain IL1403) (Streptococcus lactis).